A 115-amino-acid chain; its full sequence is Anamorsin homolog 2 (115 aa).

Positions 30 to 115 (VKEATKGEDC…KVKLNLTDDI (86 aa)) are disordered. Residues C39, C46, C49, and C51 each contribute to the [2Fe-2S] cluster site. A fe-S binding site A region spans residues 39-51 (CTTRRRACKNCTC). [4Fe-4S] cluster-binding residues include C77, C80, C88, and C91. Short sequence motifs (cx2C motif) lie at residues 77 to 80 (CGNC) and 88 to 91 (CATC). The fe-S binding site B stretch occupies residues 77 to 91 (CGNCAKGDAFRCATC).

It belongs to the anamorsin family. In terms of assembly, monomer. Requires [2Fe-2S] cluster as cofactor. [4Fe-4S] cluster is required as a cofactor.

It is found in the cytoplasm. Its subcellular location is the mitochondrion intermembrane space. Component of the cytosolic iron-sulfur (Fe-S) protein assembly (CIA) machinery. Required for the maturation of extramitochondrial Fe-S proteins. Part of an electron transfer chain functioning in an early step of cytosolic Fe-S biogenesis, facilitating the de novo assembly of a [4Fe-4S] cluster on the cytosolic Fe-S scaffold complex. Electrons are transferred from NADPH via a FAD- and FMN-containing diflavin oxidoreductase. Together with the diflavin oxidoreductase, also required for the assembly of the diferric tyrosyl radical cofactor of ribonucleotide reductase (RNR), probably by providing electrons for reduction during radical cofactor maturation in the catalytic small subunit. The polypeptide is Anamorsin homolog 2 (Trypanosoma cruzi (strain CL Brener)).